We begin with the raw amino-acid sequence, 454 residues long: Caspase-9 (454 aa).

Residues 1–92 (MDEADRQLLR…GTLASLLQSG (92 aa)) form the CARD domain. Thr-163 is subject to Phosphothreonine; by MAPK1. The residue at position 191 (Tyr-191) is a Phosphotyrosine; by ABL1. Catalysis depends on residues His-275 and Cys-325. 2 positions are modified to phosphoserine: Ser-340 and Ser-348. The propeptide occupies 354 to 367 (AVPYQEGPRPLDQL).

The protein belongs to the peptidase C14A family. Heterotetramer that consists of two anti-parallel arranged heterodimers, each one formed by a 35 kDa (p35) and a 10 kDa (p10) subunit. Caspase-9 and APAF1 bind to each other via their respective NH2-terminal CED-3 homologous domains in the presence of cytochrome C and ATP. Interacts (inactive form) with EFHD2. Interacts with HAX1. Interacts with BIRC2/c-IAP1, XIAP/BIRC4, BIRC5/survivin, BIRC6/bruce and BIRC7/livin. Interacts with ABL1 (via SH3 domain); the interaction is direct and increased in the response of cells to genotoxic stress and ABL1/c-Abl activation. Interacts with BCL2L10. Cleavages at Asp-353 by granzyme B and at Asp-368 by caspase-3 generate the two active subunits. Caspase-8 and -10 can also be involved in these processing events. In terms of processing, phosphorylated at Thr-163 by MAPK1/ERK2. Phosphorylation at Thr-163 is sufficient to block caspase-9 processing and subsequent caspase-3 activation. Phosphorylation on Tyr-191 by ABL1/c-Abl; occurs in the response of cells to DNA damage. Post-translationally, ubiquitinated by BIRC6; this activity is inhibited by DIABLO/SMAC.

The catalysed reaction is Strict requirement for an Asp residue at position P1 and with a marked preference for His at position P2. It has a preferred cleavage sequence of Leu-Gly-His-Asp-|-Xaa.. Inhibited by BIRC6; following inhibition of BIRC6-caspase binding by DIABLO/SMAC, BIRC6 is subjected to caspase cleavage, leading to an increase in active caspases. Functionally, involved in the activation cascade of caspases responsible for apoptosis execution. Binding of caspase-9 to Apaf-1 leads to activation of the protease which then cleaves and activates effector caspases caspase-3 (CASP3) or caspase-7 (CASP7). Promotes DNA damage-induced apoptosis in a ABL1/c-Abl-dependent manner. Proteolytically cleaves poly(ADP-ribose) polymerase (PARP). Cleaves BIRC6 following inhibition of BIRC6-caspase binding by DIABLO/SMAC. This is Caspase-9 (Casp9) from Mus musculus (Mouse).